A 250-amino-acid polypeptide reads, in one-letter code: MSQAAETLDGWYSLHLFYAVDWASLRLVPKDERDALVTEFQSFLENTATVRSSKSGDQAIYNITGQKADLLLWFLRPEMKSLNHIENEFNKLRIADFLIPTYSYVSVIELSNYLAGKSDEDPYENPHIKARLYPELPHSDYICFYPMNKRRNETYNWYMLTMEERQKLMYDHGMIGRKYAGKIKQFITGSVGFDDFEWGVTLFSDDVLQFKKIVYEMRFDETTARYGEFGSFFVGHIINTNEFNQFFAIS.

Fe-coproporphyrin III contacts are provided by residues Arg-131, 145–149 (YPMNK), His-172, and Gln-185. Tyr-145 is an active-site residue.

The protein belongs to the ChdC family. Type 1 subfamily. Fe-coproporphyrin III is required as a cofactor.

It catalyses the reaction Fe-coproporphyrin III + 2 H2O2 + 2 H(+) = heme b + 2 CO2 + 4 H2O. The catalysed reaction is Fe-coproporphyrin III + H2O2 + H(+) = harderoheme III + CO2 + 2 H2O. It carries out the reaction harderoheme III + H2O2 + H(+) = heme b + CO2 + 2 H2O. Its pathway is porphyrin-containing compound metabolism; protoheme biosynthesis. Involved in coproporphyrin-dependent heme b biosynthesis. Catalyzes the decarboxylation of Fe-coproporphyrin III (coproheme) to heme b (protoheme IX), the last step of the pathway. The reaction occurs in a stepwise manner with a three-propionate intermediate. In Staphylococcus aureus (strain MRSA252), this protein is Coproheme decarboxylase.